A 134-amino-acid polypeptide reads, in one-letter code: Small ribosomal subunit protein uS12 (134 aa).

Residues 1–30 (MPTINQLVKHGREKVKEKSKSPALQGHPQK) are disordered. Aspartate 89 is subject to 3-methylthioaspartic acid. The disordered stretch occupies residues 106–134 (GVENRRQSRSKYGAKRPKAGAAAGAKGKK). The span at 112–123 (QSRSKYGAKRPK) shows a compositional bias: basic residues. The segment covering 124 to 134 (AGAAAGAKGKK) has biased composition (low complexity).

This sequence belongs to the universal ribosomal protein uS12 family. As to quaternary structure, part of the 30S ribosomal subunit. Contacts proteins S8 and S17. May interact with IF1 in the 30S initiation complex.

With S4 and S5 plays an important role in translational accuracy. In terms of biological role, interacts with and stabilizes bases of the 16S rRNA that are involved in tRNA selection in the A site and with the mRNA backbone. Located at the interface of the 30S and 50S subunits, it traverses the body of the 30S subunit contacting proteins on the other side and probably holding the rRNA structure together. The combined cluster of proteins S8, S12 and S17 appears to hold together the shoulder and platform of the 30S subunit. The sequence is that of Small ribosomal subunit protein uS12 from Fervidobacterium nodosum (strain ATCC 35602 / DSM 5306 / Rt17-B1).